The following is a 792-amino-acid chain: MKFSENWLRSHVPIQATRDELAATLTAIGLEVEEVTPLGESLGQVVVARIVEAVRHPEADRLQVCSVDAGQGELLQIVCGAPNARAGLVAPLALVGAKIGELTITAAKLRGVASNGMLCSAKELGLDSDASGLFELPDDAPVGQALAEYLGLPDASIEIKLTPNRADCFSVRGIAFDVAAACASEVVAFDAGMVAPVSTRTLAVELDAGKDAPRYCGRVIEGIDPSAKTPVWLAERLRRSGVRPVSLLVDITQYVMLELGQPMHAFDLDTLQGPIGVRHSRVGEQLVLLDGRQVTLDESFLTITDAGRPVALAGLMGGLDTRVTDTTRNVFLESAYFAPEAIMGRGRKLGLHTDAGHRFERGVDPALPPQAIEVATRLVLELAGGTPGPVVHAQLPEHLPQPARIRLRRARIARVLGIQIDDADVVRMLRALGMHVEAVAEGWEVMAPSRRFDIAIEEDLIEELARIHGYDRVPTTLPGGASRIAMPSETQLDELSVRRQLVARELQETINYAFVDAALLERWQLTEGLVPLANPLSAELAIMRLRLLPGLVATLGRNAARQAGRVRLFELGKVFAAAADAGAAPGESQHVAAAVCGDALALQWGEPARKVDFHDLKGDLMALAAASGAQLEFQPSTQPFGHPGRSADIYRNGVCIGWIGQVHPRLAKALDIDVDVIAFELQLMPLVQRALPRAGELSRFPSVRRDLAFLVPDEVSWAAVSASVRTTVGPLLREVQLFDRYVGQGVEPGFKSLAMGLILQDNSRTLTDRDVDAVVTDVVAVIEREHRARIRS.

Residues 39-147 (GESLGQVVVA…DDAPVGQALA (109 aa)) enclose the tRNA-binding domain. A B5 domain is found at 400–475 (PQPARIRLRR…RIHGYDRVPT (76 aa)). Residues D453, D459, E462, and E463 each coordinate Mg(2+). One can recognise an FDX-ACB domain in the interval 698 to 791 (SRFPSVRRDL…IEREHRARIR (94 aa)).

The protein belongs to the phenylalanyl-tRNA synthetase beta subunit family. Type 1 subfamily. As to quaternary structure, tetramer of two alpha and two beta subunits. The cofactor is Mg(2+).

It localises to the cytoplasm. It catalyses the reaction tRNA(Phe) + L-phenylalanine + ATP = L-phenylalanyl-tRNA(Phe) + AMP + diphosphate + H(+). This chain is Phenylalanine--tRNA ligase beta subunit, found in Xanthomonas euvesicatoria pv. vesicatoria (strain 85-10) (Xanthomonas campestris pv. vesicatoria).